The chain runs to 230 residues: ATP-dependent dethiobiotin synthetase BioD (230 aa).

An ATP-binding site is contributed by 12–17 (DVGKTV). Threonine 16 is a binding site for Mg(2+). Lysine 37 is a catalytic residue. Substrate is bound at residue threonine 41. ATP-binding positions include aspartate 49, 108–111 (EGAG), 168–169 (GS), and 198–200 (PEG). The Mg(2+) site is built by aspartate 49 and glutamate 108.

The protein belongs to the dethiobiotin synthetase family. As to quaternary structure, homodimer. It depends on Mg(2+) as a cofactor.

Its subcellular location is the cytoplasm. It catalyses the reaction (7R,8S)-7,8-diammoniononanoate + CO2 + ATP = (4R,5S)-dethiobiotin + ADP + phosphate + 3 H(+). The protein operates within cofactor biosynthesis; biotin biosynthesis; biotin from 7,8-diaminononanoate: step 1/2. Its function is as follows. Catalyzes a mechanistically unusual reaction, the ATP-dependent insertion of CO2 between the N7 and N8 nitrogen atoms of 7,8-diaminopelargonic acid (DAPA, also called 7,8-diammoniononanoate) to form a ureido ring. The chain is ATP-dependent dethiobiotin synthetase BioD from Corynebacterium kroppenstedtii (strain DSM 44385 / JCM 11950 / CIP 105744 / CCUG 35717).